A 172-amino-acid chain; its full sequence is Cold-inducible RNA-binding protein (172 aa).

Positions 6–84 (GKLFVGGLSF…RQIRVDQAGK (79 aa)) constitute an RRM domain. The segment at 69–172 (GKSVDGRQIR…SYDSYATHNE (104 aa)) is disordered. Composition is skewed to gly residues over residues 93–106 (YRGG…FFRG) and 114–125 (FSRGGGDRGYGG). 6 positions are modified to phosphoserine: Ser-130, Ser-138, Ser-146, Ser-156, Ser-159, and Ser-163. Residues 138 to 172 (SRDYYSSRSQSGGYSDRSSGGSYRDSYDSYATHNE) show a composition bias toward low complexity.

Interacts with EIF4G1. Associates with ribosomes. Methylated on arginine residues. Methylation of the RGG motifs is a prerequisite for recruitment into SGs. Post-translationally, phosphorylated by CK2, GSK3A and GSK3B. Phosphorylation by GSK3B increases RNA-binding activity to the TXN 3'-UTR transcript upon exposure to UV radiation.

Its subcellular location is the nucleus. It is found in the nucleoplasm. The protein localises to the cytoplasm. Cold-inducible mRNA binding protein that plays a protective role in the genotoxic stress response by stabilizing transcripts of genes involved in cell survival. Acts as a translational activator. Seems to play an essential role in cold-induced suppression of cell proliferation. Binds specifically to the 3'-untranslated regions (3'-UTRs) of stress-responsive transcripts RPA2 and TXN. Acts as a translational repressor. Promotes assembly of stress granules (SGs), when overexpressed. This is Cold-inducible RNA-binding protein (CIRBP) from Pongo abelii (Sumatran orangutan).